An 873-amino-acid polypeptide reads, in one-letter code: Protein translocase subunit SecA (873 aa).

ATP is bound by residues Gln-85, 103–107, and Asp-492; that span reads GEGKT. Positions 835-856 are enriched in basic and acidic residues; the sequence is RYAEEEGKQPIRKENQIGRNDD. The tract at residues 835 to 873 is disordered; that stretch reads RYAEEEGKQPIRKENQIGRNDDCPCGSGKKYKKCCGKNA. Zn(2+)-binding residues include Cys-857, Cys-859, Cys-868, and Cys-869. The span at 863–873 shows a compositional bias: basic residues; it reads KKYKKCCGKNA.

This sequence belongs to the SecA family. In terms of assembly, monomer and homodimer. Part of the essential Sec protein translocation apparatus which comprises SecA, SecYEG and auxiliary proteins SecDF. Other proteins may also be involved. It depends on Zn(2+) as a cofactor.

It is found in the cell membrane. The protein localises to the cytoplasm. The enzyme catalyses ATP + H2O + cellular proteinSide 1 = ADP + phosphate + cellular proteinSide 2.. Its function is as follows. Part of the Sec protein translocase complex. Interacts with the SecYEG preprotein conducting channel. Has a central role in coupling the hydrolysis of ATP to the transfer of proteins into and across the cell membrane, serving as an ATP-driven molecular motor driving the stepwise translocation of polypeptide chains across the membrane. The chain is Protein translocase subunit SecA from Desulforamulus reducens (strain ATCC BAA-1160 / DSM 100696 / MI-1) (Desulfotomaculum reducens).